A 283-amino-acid polypeptide reads, in one-letter code: Flagellar filament 35 kDa core protein (283 aa).

The protein belongs to the bacterial flagellin family. The flagellum consists of two outer layers around a core that contains several antigenically related polypeptides.

It is found in the periplasmic flagellum. It localises to the periplasm. Functionally, component of the core of the flagella. This Leptospira interrogans serogroup Icterohaemorrhagiae serovar Lai (strain 56601) protein is Flagellar filament 35 kDa core protein (flaB).